The chain runs to 250 residues: tRNA (guanine-N(1)-)-methyltransferase (250 aa).

S-adenosyl-L-methionine contacts are provided by residues Gly-108 and 127-132 (LGDFVL).

It belongs to the RNA methyltransferase TrmD family. In terms of assembly, homodimer.

The protein localises to the cytoplasm. It carries out the reaction guanosine(37) in tRNA + S-adenosyl-L-methionine = N(1)-methylguanosine(37) in tRNA + S-adenosyl-L-homocysteine + H(+). Specifically methylates guanosine-37 in various tRNAs. This Streptococcus agalactiae serotype Ia (strain ATCC 27591 / A909 / CDC SS700) protein is tRNA (guanine-N(1)-)-methyltransferase.